Reading from the N-terminus, the 514-residue chain is Cholesterol side-chain cleavage enzyme, mitochondrial (514 aa).

The transit peptide at 1–39 directs the protein to the mitochondrion; it reads MMVSWSVCRSSLALPACGLPSARHNSSMPVVRQALSPDN. C458 provides a ligand contact to heme.

Belongs to the cytochrome P450 family. It depends on heme as a cofactor. In terms of tissue distribution, in the ovary, not found in early vitellogenic follicles, barely detected in postvitellogenic follicles and abundant in post-ovulatory follicles.

It is found in the mitochondrion inner membrane. The enzyme catalyses 6 reduced [adrenodoxin] + cholesterol + 3 O2 + 6 H(+) = 4-methylpentanal + pregnenolone + 6 oxidized [adrenodoxin] + 4 H2O. It participates in lipid metabolism; C21-steroid hormone metabolism. Catalyzes the side-chain cleavage reaction of cholesterol to pregnenolone, the precursor of most steroid hormones. The polypeptide is Cholesterol side-chain cleavage enzyme, mitochondrial (cyp11a1) (Oncorhynchus mykiss (Rainbow trout)).